The sequence spans 174 residues: MTLILGIDPGSRITGFGVVRETARGCEYVASGCIRTGNGPLHERLHVVFRSVREVIRTHGPTALSIEQVFMARNADSALKLGQARGAAIVAAMEEGLSVAEYTASQVKQAVVGTGGADKQQVQMMVMHLLKLTQKPQIDASDALAIALCHAHTQQSLVPHGLVGARRRGGRLRL.

Residues D8, E67, and D139 contribute to the active site. Positions 8, 67, and 139 each coordinate Mg(2+).

It belongs to the RuvC family. In terms of assembly, homodimer which binds Holliday junction (HJ) DNA. The HJ becomes 2-fold symmetrical on binding to RuvC with unstacked arms; it has a different conformation from HJ DNA in complex with RuvA. In the full resolvosome a probable DNA-RuvA(4)-RuvB(12)-RuvC(2) complex forms which resolves the HJ. The cofactor is Mg(2+).

It is found in the cytoplasm. It carries out the reaction Endonucleolytic cleavage at a junction such as a reciprocal single-stranded crossover between two homologous DNA duplexes (Holliday junction).. The RuvA-RuvB-RuvC complex processes Holliday junction (HJ) DNA during genetic recombination and DNA repair. Endonuclease that resolves HJ intermediates. Cleaves cruciform DNA by making single-stranded nicks across the HJ at symmetrical positions within the homologous arms, yielding a 5'-phosphate and a 3'-hydroxyl group; requires a central core of homology in the junction. The consensus cleavage sequence is 5'-(A/T)TT(C/G)-3'. Cleavage occurs on the 3'-side of the TT dinucleotide at the point of strand exchange. HJ branch migration catalyzed by RuvA-RuvB allows RuvC to scan DNA until it finds its consensus sequence, where it cleaves and resolves the cruciform DNA. This chain is Crossover junction endodeoxyribonuclease RuvC, found in Pseudomonas aeruginosa (strain LESB58).